The chain runs to 45 residues: Large ribosomal subunit protein bL34 (45 aa).

Residues 1 to 27 (MTKRTLGGTSRKRKRVSGFRVRMRTHT) form a disordered region. The segment covering 10–27 (SRKRKRVSGFRVRMRTHT) has biased composition (basic residues).

Belongs to the bacterial ribosomal protein bL34 family.

The sequence is that of Large ribosomal subunit protein bL34 from Prochlorococcus marinus (strain MIT 9211).